The following is a 431-amino-acid chain: UDP-N-acetylglucosamine--N-acetylmuramyl-(pentapeptide) pyrophosphoryl-undecaprenol N-acetylglucosamine transferase (431 aa).

Residues 29–31 (TGG), Asn141, Arg177, Ser205, Ile258, and Gln303 each bind UDP-N-acetyl-alpha-D-glucosamine. A disordered region spans residues 370-431 (AGSGDGQPPA…NPGASAGGAP (62 aa)). A compositionally biased stretch (polar residues) spans 395-420 (KQGSMQTSVNGDRSAQLIATNPQSRL).

This sequence belongs to the glycosyltransferase 28 family. MurG subfamily.

The protein localises to the cell inner membrane. It catalyses the reaction di-trans,octa-cis-undecaprenyl diphospho-N-acetyl-alpha-D-muramoyl-L-alanyl-D-glutamyl-meso-2,6-diaminopimeloyl-D-alanyl-D-alanine + UDP-N-acetyl-alpha-D-glucosamine = di-trans,octa-cis-undecaprenyl diphospho-[N-acetyl-alpha-D-glucosaminyl-(1-&gt;4)]-N-acetyl-alpha-D-muramoyl-L-alanyl-D-glutamyl-meso-2,6-diaminopimeloyl-D-alanyl-D-alanine + UDP + H(+). Its pathway is cell wall biogenesis; peptidoglycan biosynthesis. Its function is as follows. Cell wall formation. Catalyzes the transfer of a GlcNAc subunit on undecaprenyl-pyrophosphoryl-MurNAc-pentapeptide (lipid intermediate I) to form undecaprenyl-pyrophosphoryl-MurNAc-(pentapeptide)GlcNAc (lipid intermediate II). The chain is UDP-N-acetylglucosamine--N-acetylmuramyl-(pentapeptide) pyrophosphoryl-undecaprenol N-acetylglucosamine transferase from Xanthomonas euvesicatoria pv. vesicatoria (strain 85-10) (Xanthomonas campestris pv. vesicatoria).